Reading from the N-terminus, the 91-residue chain is UPF0298 protein M28_Spy0318 (91 aa).

It belongs to the UPF0298 family.

It localises to the cytoplasm. The polypeptide is UPF0298 protein M28_Spy0318 (Streptococcus pyogenes serotype M28 (strain MGAS6180)).